We begin with the raw amino-acid sequence, 276 residues long: 4-chlorobenzoyl coenzyme A dehalogenase-1 (276 aa).

66-71 (AGFDLE) lines the substrate pocket. The Proton acceptor role is filled by His-93. Gly-117 lines the substrate pocket. Asp-148 acts as the Nucleophile in catalysis. Arg-261 is a binding site for substrate.

It belongs to the enoyl-CoA hydratase/isomerase family. In terms of assembly, homotetramer.

The enzyme catalyses 4-chlorobenzoyl-CoA + H2O = 4-hydroxybenzoyl-CoA + chloride + H(+). Its pathway is xenobiotic degradation; 4-chlorobenzoate degradation; 4-hydroxybenzoate from 4-chlorobenzoate: step 2/3. Functionally, dehalogenates 4-chlorobenzoyl-CoA, 4-iodobenzoyl-CoA, 4-bromobenzoyl-CoA and, at a slower rate, 4-fluorobenzoyl-CoA. Does not dehalogenate 2-chlorobenzoyl-CoA or 3-chlorobenzoyl-CoA. In Arthrobacter sp, this protein is 4-chlorobenzoyl coenzyme A dehalogenase-1.